The chain runs to 293 residues: N-acetylneuraminate lyase (293 aa).

The aceneuramate site is built by Ser-48 and Ser-49. Tyr-137 (proton donor) is an active-site residue. Lys-165 acts as the Schiff-base intermediate with substrate in catalysis. Positions 167, 189, 191, 192, and 208 each coordinate aceneuramate.

Belongs to the DapA family. NanA subfamily. As to quaternary structure, homotetramer.

It localises to the cytoplasm. It carries out the reaction aceneuramate = aldehydo-N-acetyl-D-mannosamine + pyruvate. Its pathway is amino-sugar metabolism; N-acetylneuraminate degradation; D-fructose 6-phosphate from N-acetylneuraminate: step 1/5. In terms of biological role, catalyzes the reversible aldol cleavage of N-acetylneuraminic acid (sialic acid; Neu5Ac) to form pyruvate and N-acetylmannosamine (ManNAc) via a Schiff base intermediate. The chain is N-acetylneuraminate lyase from Staphylococcus carnosus (strain TM300).